The sequence spans 404 residues: Argininosuccinate synthase (404 aa).

Residues A10–S18 and A37 contribute to the ATP site. 2 residues coordinate L-citrulline: Y88 and S93. G118 provides a ligand contact to ATP. Positions 120, 124, and 125 each coordinate L-aspartate. N124 serves as a coordination point for L-citrulline. Residues R128, S179, S188, E264, and Y276 each coordinate L-citrulline.

The protein belongs to the argininosuccinate synthase family. Type 1 subfamily. Homotetramer.

The protein resides in the cytoplasm. It carries out the reaction L-citrulline + L-aspartate + ATP = 2-(N(omega)-L-arginino)succinate + AMP + diphosphate + H(+). The protein operates within amino-acid biosynthesis; L-arginine biosynthesis; L-arginine from L-ornithine and carbamoyl phosphate: step 2/3. The sequence is that of Argininosuccinate synthase from Nitrosomonas eutropha (strain DSM 101675 / C91 / Nm57).